Consider the following 119-residue polypeptide: Protein TusC (119 aa).

The protein belongs to the DsrF/TusC family. As to quaternary structure, heterohexamer, formed by a dimer of trimers. The hexameric TusBCD complex contains 2 copies each of TusB, TusC and TusD. The TusBCD complex interacts with TusE.

It localises to the cytoplasm. Functionally, part of a sulfur-relay system required for 2-thiolation of 5-methylaminomethyl-2-thiouridine (mnm(5)s(2)U) at tRNA wobble positions. The sequence is that of Protein TusC from Pectobacterium carotovorum subsp. carotovorum (strain PC1).